Reading from the N-terminus, the 668-residue chain is DNA ligase (668 aa).

NAD(+) is bound by residues 31–35, 80–81, and Glu112; these read DAEYD and SL. The active-site N6-AMP-lysine intermediate is the Lys114. Arg135, Glu172, Lys289, and Lys313 together coordinate NAD(+). Zn(2+) is bound by residues Cys407, Cys410, Cys425, and Cys431. Positions 591-668 constitute a BRCT domain; that stretch reads SVPQPLAGKV…NEEQLIELLN (78 aa).

This sequence belongs to the NAD-dependent DNA ligase family. LigA subfamily. Requires Mg(2+) as cofactor. Mn(2+) is required as a cofactor.

It catalyses the reaction NAD(+) + (deoxyribonucleotide)n-3'-hydroxyl + 5'-phospho-(deoxyribonucleotide)m = (deoxyribonucleotide)n+m + AMP + beta-nicotinamide D-nucleotide.. In terms of biological role, DNA ligase that catalyzes the formation of phosphodiester linkages between 5'-phosphoryl and 3'-hydroxyl groups in double-stranded DNA using NAD as a coenzyme and as the energy source for the reaction. It is essential for DNA replication and repair of damaged DNA. The sequence is that of DNA ligase from Aliivibrio fischeri (strain ATCC 700601 / ES114) (Vibrio fischeri).